Reading from the N-terminus, the 105-residue chain is Ribosomal silencing factor RsfS (105 aa).

The protein belongs to the Iojap/RsfS family. As to quaternary structure, interacts with ribosomal protein uL14 (rplN).

It is found in the cytoplasm. Functionally, functions as a ribosomal silencing factor. Interacts with ribosomal protein uL14 (rplN), blocking formation of intersubunit bridge B8. Prevents association of the 30S and 50S ribosomal subunits and the formation of functional ribosomes, thus repressing translation. This is Ribosomal silencing factor RsfS from Escherichia coli O6:H1 (strain CFT073 / ATCC 700928 / UPEC).